Reading from the N-terminus, the 578-residue chain is Arginine--tRNA ligase (578 aa).

Positions 122 to 132 (PNLAKEMHVGH) match the 'HIGH' region motif.

Belongs to the class-I aminoacyl-tRNA synthetase family. Monomer.

It localises to the cytoplasm. It carries out the reaction tRNA(Arg) + L-arginine + ATP = L-arginyl-tRNA(Arg) + AMP + diphosphate. This is Arginine--tRNA ligase from Pseudoalteromonas atlantica (strain T6c / ATCC BAA-1087).